The chain runs to 551 residues: Harmonin (551 aa).

The N-terminal domain stretch occupies residues 1 to 86; that stretch reads MDRKVAREFR…LTPRRSRKLK (86 aa). PDZ domains lie at 87 to 169 and 211 to 293; these read EVRL…HIGL and KVFI…AGAG. Positions 194–532 are mediates interaction with MYO7B; that stretch reads GGRSSLGSPG…QKAWNQGDWI (339 aa). Residue serine 219 is modified to Phosphoserine. The stretch at 318–377 forms a coiled coil; it reads LMQKRLAMESNKILQEQQEMERQRKKEIAQKAAEENERYRKEMEQIVEEEEKFRKQWEED. The interval 401–425 is disordered; it reads KPKYDLGVDPEFDPADDLDGGTNKR. The span at 408 to 419 shows a compositional bias: acidic residues; the sequence is VDPEFDPADDLD. The PDZ 3 domain maps to 452 to 536; the sequence is DVRLLRVKKE…NQGDWIDLVV (85 aa).

Part of the IMAC/intermicrovillar adhesion complex/intermicrovillar tip-link complex composed of ANKS4B, MYO7B, USH1C, CDHR2 and CDHR5. Part of a complex composed of USH1C, USH1G and MYO7A. Interacts with F-actin. Interacts with USH2A. Interacts with SLC4A7. Interacts (via PDZ1 domain) with the C-terminus of USHBP1. Interacts (via N-terminus and PDZ 2 domain) with CDH23. Interacts with USH1G. Interacts with MYO7B. Interacts with CDHR2 and CDHR5; may mediate their interaction with MYO7B at the microvilli tip. Interacts (via PDZ 1 domain) with ANKS4B. Interacts (via PDZ 1 domain) with DOCK4.

The protein resides in the cytoplasm. Its subcellular location is the cytosol. It localises to the cytoskeleton. It is found in the cell projection. The protein localises to the microvillus. In terms of biological role, anchoring/scaffolding protein that is a part of the functional network formed by USH1C, USH1G, CDH23 and MYO7A that mediates mechanotransduction in cochlear hair cells. Required for normal development and maintenance of cochlear hair cell bundles. As part of the intermicrovillar adhesion complex/IMAC plays a role in brush border differentiation, controlling microvilli organization and length. Probably plays a central regulatory role in the assembly of the complex, recruiting CDHR2, CDHR5 and MYO7B to the microvilli tips. The chain is Harmonin (USH1C) from Bos taurus (Bovine).